Reading from the N-terminus, the 556-residue chain is 2-succinyl-5-enolpyruvyl-6-hydroxy-3-cyclohexene-1-carboxylate synthase (556 aa).

It belongs to the TPP enzyme family. MenD subfamily. In terms of assembly, homodimer. Mg(2+) is required as a cofactor. It depends on Mn(2+) as a cofactor. Thiamine diphosphate serves as cofactor.

It catalyses the reaction isochorismate + 2-oxoglutarate + H(+) = 5-enolpyruvoyl-6-hydroxy-2-succinyl-cyclohex-3-ene-1-carboxylate + CO2. The protein operates within quinol/quinone metabolism; 1,4-dihydroxy-2-naphthoate biosynthesis; 1,4-dihydroxy-2-naphthoate from chorismate: step 2/7. Its pathway is quinol/quinone metabolism; menaquinone biosynthesis. Catalyzes the thiamine diphosphate-dependent decarboxylation of 2-oxoglutarate and the subsequent addition of the resulting succinic semialdehyde-thiamine pyrophosphate anion to isochorismate to yield 2-succinyl-5-enolpyruvyl-6-hydroxy-3-cyclohexene-1-carboxylate (SEPHCHC). The chain is 2-succinyl-5-enolpyruvyl-6-hydroxy-3-cyclohexene-1-carboxylate synthase from Escherichia coli (strain 55989 / EAEC).